We begin with the raw amino-acid sequence, 191 residues long: Glutathione-dependent formaldehyde-activating enzyme (191 aa).

The 148-residue stretch at 22-169 folds into the CENP-V/GFA domain; sequence FAGGTLQCLC…LTELGLTPYD (148 aa). Cysteine 29, cysteine 31, cysteine 50, cysteine 52, cysteine 55, cysteine 97, and cysteine 100 together coordinate Zn(2+).

Belongs to the Gfa family. Requires Zn(2+) as cofactor.

The enzyme catalyses S-(hydroxymethyl)glutathione = glutathione + formaldehyde. The protein operates within one-carbon metabolism; formaldehyde degradation; formate from formaldehyde (glutathione route): step 1/3. Its function is as follows. Catalyzes the condensation of formaldehyde and glutathione to S-hydroxymethylglutathione. This Xanthomonas campestris pv. campestris (strain B100) protein is Glutathione-dependent formaldehyde-activating enzyme.